The sequence spans 429 residues: Glutamate-1-semialdehyde 2,1-aminomutase 2 (429 aa).

Lys-268 carries the post-translational modification N6-(pyridoxal phosphate)lysine.

Belongs to the class-III pyridoxal-phosphate-dependent aminotransferase family. HemL subfamily. Homodimer. Requires pyridoxal 5'-phosphate as cofactor.

It localises to the cytoplasm. It catalyses the reaction (S)-4-amino-5-oxopentanoate = 5-aminolevulinate. It functions in the pathway porphyrin-containing compound metabolism; protoporphyrin-IX biosynthesis; 5-aminolevulinate from L-glutamyl-tRNA(Glu): step 2/2. In Staphylococcus epidermidis (strain ATCC 35984 / DSM 28319 / BCRC 17069 / CCUG 31568 / BM 3577 / RP62A), this protein is Glutamate-1-semialdehyde 2,1-aminomutase 2.